The sequence spans 509 residues: Maturase K (509 aa).

Belongs to the intron maturase 2 family. MatK subfamily.

It is found in the plastid. Its subcellular location is the chloroplast. In terms of biological role, usually encoded in the trnK tRNA gene intron. Probably assists in splicing its own and other chloroplast group II introns. This chain is Maturase K, found in Abies firma (Momi fir).